The chain runs to 55 residues: Large ribosomal subunit protein bL33 (55 aa).

It belongs to the bacterial ribosomal protein bL33 family.

This Gluconacetobacter diazotrophicus (strain ATCC 49037 / DSM 5601 / CCUG 37298 / CIP 103539 / LMG 7603 / PAl5) protein is Large ribosomal subunit protein bL33.